Here is a 79-residue protein sequence, read N- to C-terminus: Small ribosomal subunit protein bS16 (79 aa).

Belongs to the bacterial ribosomal protein bS16 family.

This chain is Small ribosomal subunit protein bS16, found in Marinobacter nauticus (strain ATCC 700491 / DSM 11845 / VT8) (Marinobacter aquaeolei).